A 320-amino-acid chain; its full sequence is tRNA dimethylallyltransferase (320 aa).

An ATP-binding site is contributed by 16–23 (GPTASGKT). 18–23 (TASGKT) contacts substrate. Interaction with substrate tRNA stretches follow at residues 41-44 (DSAL), 165-169 (QRIQR), and 247-252 (RCVGYR).

Belongs to the IPP transferase family. In terms of assembly, monomer. Requires Mg(2+) as cofactor.

The enzyme catalyses adenosine(37) in tRNA + dimethylallyl diphosphate = N(6)-dimethylallyladenosine(37) in tRNA + diphosphate. Functionally, catalyzes the transfer of a dimethylallyl group onto the adenine at position 37 in tRNAs that read codons beginning with uridine, leading to the formation of N6-(dimethylallyl)adenosine (i(6)A). The sequence is that of tRNA dimethylallyltransferase from Azoarcus sp. (strain BH72).